The following is a 675-amino-acid chain: Methionine--tRNA ligase (675 aa).

The 'HIGH' region motif lies at P15 to H25. C146, C149, C159, and C162 together coordinate Zn(2+). A 'KMSKS' region motif is present at residues K332–S336. K335 contributes to the ATP binding site. The 103-residue stretch at D573–K675 folds into the tRNA-binding domain.

Belongs to the class-I aminoacyl-tRNA synthetase family. MetG type 1 subfamily. As to quaternary structure, homodimer. Requires Zn(2+) as cofactor.

The protein localises to the cytoplasm. It catalyses the reaction tRNA(Met) + L-methionine + ATP = L-methionyl-tRNA(Met) + AMP + diphosphate. In terms of biological role, is required not only for elongation of protein synthesis but also for the initiation of all mRNA translation through initiator tRNA(fMet) aminoacylation. The protein is Methionine--tRNA ligase of Serratia proteamaculans (strain 568).